Here is a 311-residue protein sequence, read N- to C-terminus: Ribosomal RNA small subunit methyltransferase A (311 aa).

6 residues coordinate S-adenosyl-L-methionine: N29, V31, G56, E77, D107, and N126.

The protein belongs to the class I-like SAM-binding methyltransferase superfamily. rRNA adenine N(6)-methyltransferase family. RsmA subfamily.

It localises to the cytoplasm. The catalysed reaction is adenosine(1518)/adenosine(1519) in 16S rRNA + 4 S-adenosyl-L-methionine = N(6)-dimethyladenosine(1518)/N(6)-dimethyladenosine(1519) in 16S rRNA + 4 S-adenosyl-L-homocysteine + 4 H(+). Specifically dimethylates two adjacent adenosines (A1518 and A1519) in the loop of a conserved hairpin near the 3'-end of 16S rRNA in the 30S particle. May play a critical role in biogenesis of 30S subunits. This chain is Ribosomal RNA small subunit methyltransferase A, found in Mycolicibacterium vanbaalenii (strain DSM 7251 / JCM 13017 / BCRC 16820 / KCTC 9966 / NRRL B-24157 / PYR-1) (Mycobacterium vanbaalenii).